A 383-amino-acid polypeptide reads, in one-letter code: tRNA-specific 2-thiouridylase MnmA (383 aa).

Residues 9-16 (GMSGGVDS) and Met-35 contribute to the ATP site. Positions 95–97 (NPD) are interaction with target base in tRNA. The Nucleophile role is filled by Cys-100. Cys-100 and Cys-196 are joined by a disulfide. Gly-124 contributes to the ATP binding site. Residues 146–148 (KDQ) are interaction with tRNA. Cys-196 serves as the catalytic Cysteine persulfide intermediate. Residues 308–309 (RY) are interaction with tRNA.

This sequence belongs to the MnmA/TRMU family.

Its subcellular location is the cytoplasm. It catalyses the reaction S-sulfanyl-L-cysteinyl-[protein] + uridine(34) in tRNA + AH2 + ATP = 2-thiouridine(34) in tRNA + L-cysteinyl-[protein] + A + AMP + diphosphate + H(+). Its function is as follows. Catalyzes the 2-thiolation of uridine at the wobble position (U34) of tRNA, leading to the formation of s(2)U34. The chain is tRNA-specific 2-thiouridylase MnmA from Burkholderia pseudomallei (strain 668).